The chain runs to 984 residues: MRLLNIFTTLCLLLWSGAATNDGLTDVVEWDPYSLTINGDRVFIYSAEFHYQRMPVPELWLDIFQKFRANGFNTISVYFFWSYHEASKGSFDFETSGKNVQRVLDYAKEAGIYVIARAGPYCNAETSAGGLALWGSDGSMGTLRTNNAAYYQSWQPWIKEIGAILAKNQVTNGGPVILNQVENELQETVHSATNTLVLYMEQLETAFRAAGITVPFSHNEKGQRSQSWSTDYENVGGAVNVYGLDSYPGGLSCTNSNSGFSVVRNYYQWFSNYSYTQPSYFPEFEGGYFTPWGGSFYDECQSELDPSFPDVYYKNNIGQRTTLMSLYMAWGGTNWGHSAAPVVYTSYDYAAPLRETRQIRDKLSQTKLIGLFTRVSTDLLKTDMIGNGTGHSVSSTGIWSWVLRNPDTQAGFTVVQQASSGSRASVTFDVYLNTSLGAVTASDVNLNGRQSKILVTDYNFGNHTLLYASSDILTYGTFDVDVLVFYLEQGQIGQFALKTTSKLTYQVYGNSVFAANSSSTSTSQTFTYTQGAGQTVVQFSDGALVYLLDQPSAWKFWAPPTTSNPQVKPNEQIFVLGPYLVRNASISSGVAQIFGDNDNATTIEVYAGSSLTSIVWNGVSLSATKTKYGSYSASLPGTESRVISLPSLTNWESANSLPEKETSYDDSKWTVCNKTTTLSPIAPLTLPVLFSSDYGFYTGQKIYRGYFDGLTYTSINITCSGGLAFGWSAWLNGVLIGGNTGVATATTTNAVLDLTNFTSVIKSENNLVTVVVDYHGHDETSTAKGVENPRGILGAFLVPKPSASTGFKLWKIQGNAGGSANIDPVRGPMNEGGFYGERVGWHLPSSPSLPSDSTPLIGLNTSGISFYTTNFTLALDSDLDVPLGIKLSAPAGTIARVMFWINGYQYGKYVPHIGPQTVFPIPPGIINNQGSNKLALSLWAMTDAGARLTDVELVSYGVYESGFGFDRDWSYLQPGWDEGRLAYA.

The N-terminal stretch at 1 to 19 (MRLLNIFTTLCLLLWSGAA) is a signal peptide. Residues Tyr-78, Asn-123, Ala-124, Glu-125, and Asn-183 each contribute to the substrate site. Catalysis depends on Glu-184, which acts as the Proton donor. A substrate-binding site is contributed by Tyr-247. Cysteines 253 and 300 form a disulfide. A glycan (N-linked (GlcNAc...) asparagine) is linked at Asn-272. Catalysis depends on Glu-283, which acts as the Nucleophile. Substrate is bound at residue Tyr-349. N-linked (GlcNAc...) asparagine glycosylation is found at Asn-387, Asn-433, Asn-462, Asn-516, Asn-583, Asn-599, Asn-673, Asn-716, Asn-756, Asn-860, and Asn-870.

Belongs to the glycosyl hydrolase 35 family.

The protein localises to the secreted. It carries out the reaction Hydrolysis of terminal non-reducing beta-D-galactose residues in beta-D-galactosides.. In terms of biological role, cleaves beta-linked terminal galactosyl residues from gangliosides, glycoproteins, and glycosaminoglycans. This chain is Probable beta-galactosidase C (lacC), found in Sclerotinia sclerotiorum (strain ATCC 18683 / 1980 / Ss-1) (White mold).